The sequence spans 291 residues: Porphobilinogen deaminase (291 aa).

C237 is subject to S-(dipyrrolylmethanemethyl)cysteine.

It belongs to the HMBS family. Monomer. It depends on dipyrromethane as a cofactor.

It carries out the reaction 4 porphobilinogen + H2O = hydroxymethylbilane + 4 NH4(+). The protein operates within porphyrin-containing compound metabolism; protoporphyrin-IX biosynthesis; coproporphyrinogen-III from 5-aminolevulinate: step 2/4. Tetrapolymerization of the monopyrrole PBG into the hydroxymethylbilane pre-uroporphyrinogen in several discrete steps. This Clostridium perfringens (strain SM101 / Type A) protein is Porphobilinogen deaminase.